The primary structure comprises 885 residues: Protein kintoun (885 aa).

Disordered regions lie at residues 208–235, 371–390, 607–636, 644–663, 781–806, and 819–871; these read LSKN…ADAG, LSRE…PVED, ELQQ…ESAC, EHHE…QRSY, RRLS…QPAH, and NNNH…MMFE. Over residues 213–232 the composition is skewed to basic and acidic residues; the sequence is TAEEKEPHPLEHMYPKKPEA. S376 carries the post-translational modification Phosphoserine. Over residues 612-629 the composition is skewed to basic residues; it reads HHQKKLNKKQRKRNKKQR. Position 784 is a phosphoserine (S784). Residues 824-837 are compositionally biased toward basic and acidic residues; the sequence is HVKDNKKQSLHDSG. The segment covering 842–855 has biased composition (low complexity); that stretch reads NGSINNKNNHSNEN.

The protein belongs to the PIH1 family. Kintoun subfamily. Interacts with Pp1alpha-96A, Pp1-87B, Pp1-13C and flw.

The protein resides in the cytoplasm. In terms of biological role, required for cytoplasmic pre-assembly of axonemal dyneins, thereby playing a central role in motility in cilia and flagella. Involved in pre-assembly of dynein arm complexes in the cytoplasm before intraflagellar transport loads them for the ciliary compartment. The chain is Protein kintoun from Drosophila mojavensis (Fruit fly).